Here is a 352-residue protein sequence, read N- to C-terminus: MKKNKLSKNQHRRIQAHHQYRLHPTSLTDDKNNQLDDAQFGEPQQGVVISRFGQHADVEGHQGQQQRCHIRRNVLSLVTGDRVIWRPGIPRQENRNVKGIVEAVHERKSVLTRPDFYDGIKPMAANIDQIVIVSAVIPDLSLNMIDRYLVVSESLNIKPLLLLNKIDLLTPNERKKINLRLNIYRNIHYTVLEVSAQTGEGIADLQANLLDRVSIFSGQSGVGKSSLLNTLLPPTEQQILVEALSEKSALGQHTTTTSRLYHFQQGGDLIDSPGIREFGLWHLTQEQIIQGFIEFRDYVGHCKFRDCAHIDDPCCALRDAVQKGHIAKERFDNYHQILSEITLKGKKLFNQD.

The segment covering 1–21 has biased composition (basic residues); it reads MKKNKLSKNQHRRIQAHHQYR. A disordered region spans residues 1-38; the sequence is MKKNKLSKNQHRRIQAHHQYRLHPTSLTDDKNNQLDDA. The region spanning 116 to 278 is the CP-type G domain; that stretch reads FYDGIKPMAA…LIDSPGIREF (163 aa). GTP contacts are provided by residues 164–167 and 218–226; these read NKID and GQSGVGKSS. The Zn(2+) site is built by cysteine 302, cysteine 307, histidine 309, and cysteine 315.

This sequence belongs to the TRAFAC class YlqF/YawG GTPase family. RsgA subfamily. Monomer. Associates with 30S ribosomal subunit, binds 16S rRNA. Zn(2+) is required as a cofactor.

Its subcellular location is the cytoplasm. One of several proteins that assist in the late maturation steps of the functional core of the 30S ribosomal subunit. Helps release RbfA from mature subunits. May play a role in the assembly of ribosomal proteins into the subunit. Circularly permuted GTPase that catalyzes slow GTP hydrolysis, GTPase activity is stimulated by the 30S ribosomal subunit. This chain is Small ribosomal subunit biogenesis GTPase RsgA, found in Hamiltonella defensa subsp. Acyrthosiphon pisum (strain 5AT).